A 227-amino-acid polypeptide reads, in one-letter code: Guanylate kinase (227 aa).

Residues 21-199 (GNLFMVVAPS…ALAELECIVA (179 aa)) form the Guanylate kinase-like domain. 28–35 (APSGAGKS) contacts ATP.

The protein belongs to the guanylate kinase family.

It is found in the cytoplasm. It catalyses the reaction GMP + ATP = GDP + ADP. In terms of biological role, essential for recycling GMP and indirectly, cGMP. This chain is Guanylate kinase, found in Burkholderia lata (strain ATCC 17760 / DSM 23089 / LMG 22485 / NCIMB 9086 / R18194 / 383).